The following is a 326-amino-acid chain: ELMO domain-containing protein 1 (326 aa).

The 174-residue stretch at 133-306 (QHEEMLLKLW…KFRKRIIKQL (174 aa)) folds into the ELMO domain.

In terms of biological role, acts as a GTPase-activating protein (GAP) toward guanine nucleotide exchange factors like ARL2, ARL3, ARF1 and ARF6, but not for GTPases outside the Arf family. The polypeptide is ELMO domain-containing protein 1 (Elmod1) (Mus musculus (Mouse)).